Consider the following 61-residue polypeptide: Potassium channel toxin alpha-KTx 6.7 (61 aa).

The N-terminal stretch at 1–23 is a signal peptide; the sequence is MNAKFILLLLVVTTTMLLPDTQG. Cystine bridges form between cysteine 29–cysteine 50, cysteine 35–cysteine 55, cysteine 39–cysteine 57, and cysteine 45–cysteine 60. Cysteine 60 carries the cysteine amide modification.

It belongs to the short scorpion toxin superfamily. Potassium channel inhibitor family. Alpha-KTx 06 subfamily. In terms of tissue distribution, expressed by the venom gland.

It is found in the secreted. Functionally, blocker of voltage-gated potassium channels. The protein is Potassium channel toxin alpha-KTx 6.7 of Opistophthalmus carinatus (African yellow leg scorpion).